The sequence spans 324 residues: Disintegrin-like/cysteine-rich protein MPIII-3 (324 aa).

The N-terminal stretch at 1–20 (MIQVLLVIICLAVFPYQVSS) is a signal peptide. The propeptide at 21–173 (IILESGNINN…DEDPKKCEFR (153 aa)) is or 174 (in a minor form). The 40-residue stretch at 168-207 (KKCEFRRAGTECRPARSECDVAEYCTGQSAECPTDVFHSN) folds into the Disintegrin; truncated domain. The tract at residues 179 to 192 (CRPARSECDVAEYC) is inhibits platelet aggregation. 9 disulfide bridges follow: cysteine 179–cysteine 199, cysteine 186–cysteine 218, cysteine 192–cysteine 199, cysteine 211–cysteine 223, cysteine 230–cysteine 280, cysteine 245–cysteine 287, cysteine 258–cysteine 268, cysteine 275–cysteine 312, and cysteine 306–cysteine 317. A D/ECD-tripeptide motif is present at residues 185–187 (ECD). The Ca(2+) site is built by aspartate 187 and glutamate 190. Ca(2+) contacts are provided by aspartate 202 and valine 203. Asparagine 237 is a glycosylation site (N-linked (GlcNAc...) asparagine).

The protein belongs to the venom metalloproteinase (M12B) family. P-III subfamily. P-IIIe sub-subfamily. Monomer. Is able to form a homodimer. N-glycosylated. Exists in at least six differently N-glycosylated forms. The glycans likely have a stabilizing purpose. In terms of processing, cys-199 forms a disulfide bond with Cys-192 in 90% and with Cys-179 in 10% of the protein molecules; alternative disulfide bonds may have a major effect on the conformation of the protein. As to expression, expressed by the venom gland (at protein level). Expressed by the venom gland.

It is found in the secreted. Its activity is regulated as follows. Activity may be regulated by the intramolecular thiol-disulfide exchange or disulfide bond switching. Abolishes platelet aggregation induced by collagen, ADP (IC(50)=292 nM) and arachidonic-acid. The inhibition of collagen-induced platelet aggregation may be due to its ability to bind collagen and block the binding site on collagen for platelets and/or to its ability to bind to the platelet alpha-2/beta-1 collagen receptor (ITGA2/ITGB1) to block its interaction with collagen and hence prevent platelet stimulation. The inhibition of ADP- or arachidonic-acid-induced platelet aggregation may be due to it acting as an antagonist of the ADP receptors or thromboxane-prostanoid receptors of the platelets, respectively. Does not interact with integrins alpha-IIb (ITGA2B) or beta-3 (ITGB3) nor platelet glycoproteins VI (GP6) or IX (GP9) in vitro, however, the detection is dependent on experimental conditions and may happen in vivo. Able to bind to platelet glycoprotein Ib alpha chain (GP1BA) receptor in vitro, although this interaction may have pathologically only limited effect in vivo as it is not able to abolish the von Willebrand factor (vWF)-dependent platelet agglutination induced by ristocetin. Does not affect blood coagulation. This is Disintegrin-like/cysteine-rich protein MPIII-3 from Vipera ammodytes ammodytes (Western sand viper).